A 278-amino-acid polypeptide reads, in one-letter code: 3-methyl-2-oxobutanoate hydroxymethyltransferase (278 aa).

2 residues coordinate Mg(2+): D49 and D88. Residues 49–50, D88, and K118 each bind 3-methyl-2-oxobutanoate; that span reads DS. E120 contributes to the Mg(2+) binding site. The Proton acceptor role is filled by E186.

The protein belongs to the PanB family. As to quaternary structure, homodecamer; pentamer of dimers. Requires Mg(2+) as cofactor.

Its subcellular location is the cytoplasm. The enzyme catalyses 3-methyl-2-oxobutanoate + (6R)-5,10-methylene-5,6,7,8-tetrahydrofolate + H2O = 2-dehydropantoate + (6S)-5,6,7,8-tetrahydrofolate. The protein operates within cofactor biosynthesis; (R)-pantothenate biosynthesis; (R)-pantoate from 3-methyl-2-oxobutanoate: step 1/2. In terms of biological role, catalyzes the reversible reaction in which hydroxymethyl group from 5,10-methylenetetrahydrofolate is transferred onto alpha-ketoisovalerate to form ketopantoate. This chain is 3-methyl-2-oxobutanoate hydroxymethyltransferase, found in Bordetella parapertussis (strain 12822 / ATCC BAA-587 / NCTC 13253).